The primary structure comprises 641 residues: Frizzled-1 (641 aa).

A signal peptide spans 1-68; the sequence is MAEEAVPSES…WLLEAPLLLG (68 aa). The Extracellular segment spans residues 69–316; sequence VRAQPAGQVS…PEELRFSRTW (248 aa). Residues 74–99 form a disordered region; the sequence is AGQVSGPGQQRPPPPQPQQGGQQYNG. An FZ domain is found at 106–224; sequence PDHGYCQPIS…HGAGELCVGQ (119 aa). Cystine bridges form between cysteine 111/cysteine 172, cysteine 119/cysteine 165, cysteine 156/cysteine 192, cysteine 182/cysteine 221, and cysteine 186/cysteine 209. Asparagine 125 carries N-linked (GlcNAc...) asparagine glycosylation. A glycan (N-linked (GlcNAc...) asparagine) is linked at asparagine 225. A helical transmembrane segment spans residues 317 to 337; that stretch reads IGIWSVLCCASTLFTVLTYLV. At 338–348 the chain is on the cytoplasmic side; it reads DMRRFSYPERP. Residues 349–369 traverse the membrane as a helical segment; it reads IIFLSGCYTAVAVAYIAGFLL. Residues 370 to 396 are Extracellular-facing; that stretch reads EDRVVCNDKFAEDGARTVAQGTKKEGC. A helical membrane pass occupies residues 397 to 417; the sequence is TILFMMLYFFSMASSIWWVIL. The Cytoplasmic segment spans residues 418–439; that stretch reads SLTWFLAAGMKWGHEAIEANSQ. A helical membrane pass occupies residues 440 to 460; that stretch reads YFHLAAWAVPAIKTITILALG. Over 461 to 483 the chain is Extracellular; that stretch reads QVDGDVLSGVCFVGLNNVDALRG. A helical transmembrane segment spans residues 484 to 504; that stretch reads FVLAPLFVYLFIGTSFLLAGF. Residues 505-530 are Cytoplasmic-facing; the sequence is VSLFRIRTIMKHDGTKTEKLEKLMVR. A helical transmembrane segment spans residues 531-551; that stretch reads IGVFSVLYTVPATIVIACYFY. Over 552–595 the chain is Extracellular; that stretch reads EQAFRDQWERSWVAQSCKSYAIPCPHLQGGGGVPPHPPMSPDFT. The chain crosses the membrane as a helical span at residues 596–616; that stretch reads VFMIKYLMTLIVGITSGFWIW. Topologically, residues 617–641 are cytoplasmic; the sequence is SGKTLNSWRKFYTRLTNSKQGETTV. Positions 619–624 match the Lys-Thr-X-X-X-Trp motif, mediates interaction with the PDZ domain of Dvl family members motif; sequence KTLNSW. A PDZ-binding motif is present at residues 639-641; it reads TTV.

This sequence belongs to the G-protein coupled receptor Fz/Smo family. Interacts with MYOC. Interacts with WNT7B. In terms of processing, ubiquitinated by ZNRF3, leading to its degradation by the proteasome. In terms of tissue distribution, widely expressed. Most abundant in kidney, liver, uterus, ovary and heart. Lower levels seen in brain and intestine. Extremely low in calvaria, mammary glands and testis.

Its subcellular location is the cell membrane. Receptor for Wnt proteins. Activated by WNT3A, WNT3, WNT1 and to a lesser extent WNT2, but apparently not by WNT4, WNT5A, WNT5B, WNT6 or WNT7A. Contradictory results have been reported for activation by WNT7B. Functions in the canonical Wnt/beta-catenin signaling pathway. The canonical Wnt/beta-catenin signaling pathway leads to the activation of disheveled proteins, inhibition of GSK-3 kinase, nuclear accumulation of beta-catenin and activation of Wnt target genes. A second signaling pathway involving PKC and calcium fluxes has been seen for some family members, but it is not yet clear if it represents a distinct pathway or if it can be integrated in the canonical pathway, as PKC seems to be required for Wnt-mediated inactivation of GSK-3 kinase. Both pathways seem to involve interactions with G-proteins. May be involved in transduction and intercellular transmission of polarity information during tissue morphogenesis and/or in differentiated tissues. The sequence is that of Frizzled-1 (Fzd1) from Rattus norvegicus (Rat).